Consider the following 224-residue polypeptide: UPF0758 protein PFL_6051 (224 aa).

One can recognise an MPN domain in the interval 102–224; the sequence is ALENPLVVRD…PLSMAEYGWI (123 aa). Zn(2+) contacts are provided by His-173, His-175, and Asp-186. Positions 173–186 match the JAMM motif motif; that stretch reads HNHPSGICEPSPAD.

This sequence belongs to the UPF0758 family.

The protein is UPF0758 protein PFL_6051 of Pseudomonas fluorescens (strain ATCC BAA-477 / NRRL B-23932 / Pf-5).